The primary structure comprises 440 residues: D-serine dehydratase (440 aa).

Lys-116 carries the post-translational modification N6-(pyridoxal phosphate)lysine.

Belongs to the serine/threonine dehydratase family. DsdA subfamily. As to quaternary structure, monomer. It depends on pyridoxal 5'-phosphate as a cofactor.

The enzyme catalyses D-serine = pyruvate + NH4(+). This is D-serine dehydratase from Salmonella dublin (strain CT_02021853).